The following is a 462-amino-acid chain: 3beta-hydroxysteroid dehydrogenase/Delta(5)-Delta(4) isomerase 1 (462 aa).

NAD(+)-binding positions include Gly51–Leu56, Tyr220, and Lys224. Lys224 (proton donor) is an active-site residue. 2 helical membrane-spanning segments follow: residues Val321 to Ile341 and Val428 to Trp448.

The protein belongs to the 3-beta-HSD family. In terms of tissue distribution, expressed exclusively in the neuron-like XXX(L/R) cells through all four larval stages and becomes fainter in adults.

The protein resides in the membrane. It carries out the reaction a 3beta-hydroxy-Delta(5)-steroid + NAD(+) = a 3-oxo-Delta(5)-steroid + NADH + H(+). The enzyme catalyses cholesterol + NAD(+) = cholest-5-en-3-one + NADH + H(+). The catalysed reaction is a 3-oxo-Delta(5)-steroid = a 3-oxo-Delta(4)-steroid. It catalyses the reaction cholest-5-en-3-one = cholest-4-en-3-one. Its pathway is steroid hormone biosynthesis; dafachronic acid biosynthesis. Its function is as follows. Hydroxysteroid dehydrogenase involved in the biosynthesis of dafrachonic acids. Catalyzes the dehydrogenation of cholesterol or its derivatives and the isomerization of the double carbon bond on the sterol ring. Modifies sterols into a Delta(4)-3-keto-sterols such as cholest-4-en-3-one, precursor of Delta(4)-dafachronic acid. Contributes to the production of Delta(7)-dafachronic acid in the XXX cells. Dafachronic acids act as ligands and bind directly to the nuclear hormone receptor (NHR) daf-12 suppressing dauer formation and inducing reproductive growth. Acts in parallel to AKT-1 to promote reproductive development via DAF-16/FoxO and DAF-12. This Caenorhabditis elegans protein is 3beta-hydroxysteroid dehydrogenase/Delta(5)-Delta(4) isomerase 1.